Reading from the N-terminus, the 380-residue chain is Cytochrome b (380 aa).

The next 4 helical transmembrane spans lie at 34–54 (FGSLLGICLMTQILTGLLLAT), 78–99 (WLIRNLHANGASFFFICIYLHI), 114–134 (WNTGVILLLTLMATAFVGYVL), and 179–199 (FFALHFLLPFMIAGLTTIHLT). Residues His-84 and His-98 each coordinate heme b. The heme b site is built by His-183 and His-197. Position 202 (His-202) interacts with a ubiquinone. Transmembrane regions (helical) follow at residues 227–247 (LKDILGFTLMLLPLTILALFS), 289–309 (LGGVLALAASVLILFLTPFLH), 321–341 (ISQLLFWILVTNLLILTWVGS), and 348–368 (FIIIGQLASITYFTILLILFP).

Belongs to the cytochrome b family. The cytochrome bc1 complex contains 11 subunits: 3 respiratory subunits (MT-CYB, CYC1 and UQCRFS1), 2 core proteins (UQCRC1 and UQCRC2) and 6 low-molecular weight proteins (UQCRH/QCR6, UQCRB/QCR7, UQCRQ/QCR8, UQCR10/QCR9, UQCR11/QCR10 and a cleavage product of UQCRFS1). This cytochrome bc1 complex then forms a dimer. Requires heme b as cofactor.

Its subcellular location is the mitochondrion inner membrane. Its function is as follows. Component of the ubiquinol-cytochrome c reductase complex (complex III or cytochrome b-c1 complex) that is part of the mitochondrial respiratory chain. The b-c1 complex mediates electron transfer from ubiquinol to cytochrome c. Contributes to the generation of a proton gradient across the mitochondrial membrane that is then used for ATP synthesis. The chain is Cytochrome b (MT-CYB) from Pelecanoides magellani (Magellanic diving petrel).